Consider the following 172-residue polypeptide: MGSTTSSQKFIARNRAPRVQIEYDVELYGAEKKVQLPFVMGVMADLAGKPAEPQAAVADRKFLEIDVDNFDARLKAMKPRVAFNVPNVLTGEGNLSLDITFESMDDFSPAAVARKVDSLNKLLEARTQLANLLTYMDGKTGAEEMIMKAIKDPALLQALASAPKPKDDEPQA.

As to quaternary structure, forms a heterodimer with TssC1. Heterodimers assemble to form the sheath of the T6SS machinery. Interacts with TagJ. Interacts with TssA1.

Core component of the H1 type VI (H1-T6SS) secretion system that plays a role in the release of toxins targeting both eukaryotic and prokaryotic species. Forms the sheath of the structure by assembling into tubules together with TssC1 resulting in the stacking of cogwheel-like structures showing predominantly a 12-fold symmetry. The sheath contracts to provide the energy needed for effector delivery. The protein is Type VI secretion system sheath protein TssB1 of Pseudomonas aeruginosa (strain ATCC 15692 / DSM 22644 / CIP 104116 / JCM 14847 / LMG 12228 / 1C / PRS 101 / PAO1).